The sequence spans 92 residues: Large ribosomal subunit protein eL37 (92 aa).

The Zn(2+) site is built by C19, C22, C34, and C37. The segment at 19-37 adopts a C4-type zinc-finger fold; sequence CRRCGRSSYHIQKSKCAQC.

Belongs to the eukaryotic ribosomal protein eL37 family. Zn(2+) is required as a cofactor.

In terms of biological role, binds to the 23S rRNA. This is Large ribosomal subunit protein eL37 (RpL37) from Spodoptera frugiperda (Fall armyworm).